We begin with the raw amino-acid sequence, 400 residues long: Succinate--glutarate CoA-transferase (400 aa).

Residue Asp-181 is the Nucleophile of the active site.

The protein belongs to the CoA-transferase III family.

The enzyme catalyses glutarate + succinyl-CoA = glutaryl-CoA + succinate. It participates in amino-acid degradation. Its pathway is cofactor biosynthesis; biotin biosynthesis. Its function is as follows. Is involved in L-lysine degradation and provides glutaryl-CoA for biotin synthesis. Catalyzes the conversion of glutarate to glutaryl-CoA via the transfer of CoA from succinyl-CoA. This is Succinate--glutarate CoA-transferase from Agrobacterium fabrum (strain C58 / ATCC 33970) (Agrobacterium tumefaciens (strain C58)).